The primary structure comprises 79 residues: MKTLLLTLVVVTIVCLDLGYTLICYSSSMNKDSKTCQKWETVCFQEAFKPHSSGMIILRGCASSCPKGYTCCATDLCNW.

A signal peptide spans methionine 1–threonine 21. Intrachain disulfides connect cysteine 24–cysteine 43, cysteine 36–cysteine 61, cysteine 65–cysteine 71, and cysteine 72–cysteine 77.

Expressed by the venom gland.

It is found in the secreted. Functionally, blocks both the muscle-twitch response to nerve stimulation and the response to exogenous acetylcholine. The polypeptide is Neurotoxin 3FTx-LI (Bungarus fasciatus (Banded krait)).